The primary structure comprises 379 residues: Succinyl-diaminopimelate desuccinylase (379 aa).

A Zn(2+)-binding site is contributed by H70. The active site involves D72. Residue D103 participates in Zn(2+) binding. The active-site Proton acceptor is the E137. Zn(2+) contacts are provided by E138, E166, and H352.

It belongs to the peptidase M20A family. DapE subfamily. As to quaternary structure, homodimer. Zn(2+) is required as a cofactor. It depends on Co(2+) as a cofactor.

It catalyses the reaction N-succinyl-(2S,6S)-2,6-diaminopimelate + H2O = (2S,6S)-2,6-diaminopimelate + succinate. It functions in the pathway amino-acid biosynthesis; L-lysine biosynthesis via DAP pathway; LL-2,6-diaminopimelate from (S)-tetrahydrodipicolinate (succinylase route): step 3/3. In terms of biological role, catalyzes the hydrolysis of N-succinyl-L,L-diaminopimelic acid (SDAP), forming succinate and LL-2,6-diaminopimelate (DAP), an intermediate involved in the bacterial biosynthesis of lysine and meso-diaminopimelic acid, an essential component of bacterial cell walls. The chain is Succinyl-diaminopimelate desuccinylase from Burkholderia pseudomallei (strain 1106a).